The following is an 879-amino-acid chain: Phosphoenolpyruvate carboxylase (879 aa).

Active-site residues include H138 and K546.

Belongs to the PEPCase type 1 family. Mg(2+) is required as a cofactor.

The catalysed reaction is oxaloacetate + phosphate = phosphoenolpyruvate + hydrogencarbonate. In terms of biological role, forms oxaloacetate, a four-carbon dicarboxylic acid source for the tricarboxylic acid cycle. In Pectobacterium atrosepticum (strain SCRI 1043 / ATCC BAA-672) (Erwinia carotovora subsp. atroseptica), this protein is Phosphoenolpyruvate carboxylase.